Reading from the N-terminus, the 762-residue chain is 5-methyltetrahydropteroyltriglutamate--homocysteine methyltransferase (762 aa).

5-methyltetrahydropteroyltri-L-glutamate is bound by residues 17–20 (REWK) and K111. Residues 435 to 437 (IGS) and E488 contribute to the L-homocysteine site. L-methionine-binding positions include 435–437 (IGS) and E488. Residues 519-520 (RC) and W565 each bind 5-methyltetrahydropteroyltri-L-glutamate. Residue D603 participates in L-homocysteine binding. D603 serves as a coordination point for L-methionine. 5-methyltetrahydropteroyltri-L-glutamate is bound at residue E609. Zn(2+) is bound by residues H645, C647, and E669. Catalysis depends on H698, which acts as the Proton donor. Zn(2+) is bound at residue C730.

Belongs to the vitamin-B12 independent methionine synthase family. Zn(2+) serves as cofactor.

The enzyme catalyses 5-methyltetrahydropteroyltri-L-glutamate + L-homocysteine = tetrahydropteroyltri-L-glutamate + L-methionine. It participates in amino-acid biosynthesis; L-methionine biosynthesis via de novo pathway; L-methionine from L-homocysteine (MetE route): step 1/1. Functionally, catalyzes the transfer of a methyl group from 5-methyltetrahydrofolate to homocysteine resulting in methionine formation. The polypeptide is 5-methyltetrahydropteroyltriglutamate--homocysteine methyltransferase (Bacillus cytotoxicus (strain DSM 22905 / CIP 110041 / 391-98 / NVH 391-98)).